The following is a 208-amino-acid chain: Methylthioribulose-1-phosphate dehydratase (208 aa).

Zn(2+) is bound by residues His99 and His101.

It belongs to the aldolase class II family. MtnB subfamily. The cofactor is Zn(2+).

It catalyses the reaction 5-(methylsulfanyl)-D-ribulose 1-phosphate = 5-methylsulfanyl-2,3-dioxopentyl phosphate + H2O. Its pathway is amino-acid biosynthesis; L-methionine biosynthesis via salvage pathway; L-methionine from S-methyl-5-thio-alpha-D-ribose 1-phosphate: step 2/6. Its function is as follows. Catalyzes the dehydration of methylthioribulose-1-phosphate (MTRu-1-P) into 2,3-diketo-5-methylthiopentyl-1-phosphate (DK-MTP-1-P). The protein is Methylthioribulose-1-phosphate dehydratase of Aquifex aeolicus (strain VF5).